The sequence spans 211 residues: Small ribosomal subunit protein uS4 (211 aa).

The interval 27–48 (GRKVLERRGSQPPGQHGASVRR) is disordered. The region spanning 99–162 (RRLDNVVFRL…RKRDYFKDLE (64 aa)) is the S4 RNA-binding domain.

This sequence belongs to the universal ribosomal protein uS4 family. In terms of assembly, part of the 30S ribosomal subunit. Contacts protein S5. The interaction surface between S4 and S5 is involved in control of translational fidelity.

Its function is as follows. One of the primary rRNA binding proteins, it binds directly to 16S rRNA where it nucleates assembly of the body of the 30S subunit. With S5 and S12 plays an important role in translational accuracy. This is Small ribosomal subunit protein uS4 from Herpetosiphon aurantiacus (strain ATCC 23779 / DSM 785 / 114-95).